The primary structure comprises 185 residues: Capsid protein (185 aa).

A disordered region spans residues 136-185 (NAPILSTLPETTVVRRRDRGRSPRRRTPSPRRRRSPSPRRRRSQSRESQC). Residues 149–178 (VRRRDRGRSPRRRTPSPRRRRSPSPRRRRS) show a composition bias toward basic residues. Phosphoserine; by host occurs at positions 157, 164, and 172. Residues 157–163 (SPRRRTP) form a 1; half-length repeat. A 3 X 8 AA repeats of S-P-R-R-R-[PR]-S-Q region spans residues 157 to 179 (SPRRRTPSPRRRRSPSPRRRRSQ). Residues 160–177 (RRTPSPRRRRSPSPRRRR) carry the Bipartite nuclear localization signal motif. Tandem repeats lie at residues 164 to 171 (SPRRRRSP) and 172 to 179 (SPRRRRSQ). The interval 179–185 (QSRESQC) is RNA binding.

This sequence belongs to the orthohepadnavirus core antigen family. In terms of assembly, homodimerizes, then multimerizes. Interacts with cytosol exposed regions of viral L glycoprotein present in the reticulum-to-Golgi compartment. Interacts with human FLNB. Phosphorylated form interacts with host importin alpha; this interaction depends on the exposure of the NLS, which itself depends upon genome maturation and/or phosphorylation of the capsid protein. Interacts with host NUP153. Post-translationally, phosphorylated by host SRPK1, SRPK2, and maybe protein kinase C or GAPDH. Phosphorylation is critical for pregenomic RNA packaging. Protein kinase C phosphorylation is stimulated by HBx protein and may play a role in transport of the viral genome to the nucleus at the late step during the viral replication cycle.

The protein localises to the virion. It localises to the host cytoplasm. Self assembles to form an icosahedral capsid. Most capsids appear to be large particles with an icosahedral symmetry of T=4 and consist of 240 copies of capsid protein, though a fraction forms smaller T=3 particles consisting of 180 capsid proteins. Entering capsids are transported along microtubules to the nucleus. Phosphorylation of the capsid is thought to induce exposure of nuclear localization signal in the C-terminal portion of the capsid protein that allows binding to the nuclear pore complex via the importin (karyopherin-) alpha and beta. Capsids are imported in intact form through the nuclear pore into the nuclear basket, where it probably binds NUP153. Only capsids that contain the mature viral genome can release the viral DNA and capsid protein into the nucleoplasm. Immature capsids get stuck in the basket. Capsids encapsulate the pre-genomic RNA and the P protein. Pre-genomic RNA is reverse-transcribed into DNA while the capsid is still in the cytoplasm. The capsid can then either be directed to the nucleus, providing more genomes for transcription, or bud through the endoplasmic reticulum to provide new virions. The chain is Capsid protein from Hepatitis B virus genotype A2 subtype adw2 (strain Rutter 1979) (HBV-A).